The following is a 541-amino-acid chain: Beta-glucuronidase (541 aa).

An N-terminal signal peptide occupies residues 1-20; it reads MHHHPITLLSLLLGAAQSIA. N-linked (GlcNAc...) asparagine glycans are attached at residues asparagine 69, asparagine 115, and asparagine 157. The Proton donor role is filled by glutamate 208. 3 N-linked (GlcNAc...) asparagine glycosylation sites follow: asparagine 217, asparagine 291, and asparagine 304. The active-site Nucleophile is the glutamate 324. Residues asparagine 380, asparagine 426, asparagine 441, asparagine 483, and asparagine 512 are each glycosylated (N-linked (GlcNAc...) asparagine).

The protein belongs to the glycosyl hydrolase 79 family. N-glycosylated.

The protein localises to the secreted. The catalysed reaction is a beta-D-glucuronoside + H2O = D-glucuronate + an alcohol. In terms of biological role, beta-glucuronidase that hydrolyzes beta-glucuronosyl and 4-O-methyl-beta-glucuronosyl residues of arabinogalactan-protein. Hydrolyzed heparan sulfate only very weakly. Has no activity on xylan from birchwood. Able to catalyze the transglycosylation of glucuronic acid (GlcA) residues from p-nitrophenyl-beta-glucuronic acid (PNP beta-GlcA) to various monosaccharide acceptors such as glucose, galactose and xylose. The chain is Beta-glucuronidase from Aspergillus niger (strain ATCC MYA-4892 / CBS 513.88 / FGSC A1513).